The primary structure comprises 236 residues: UPF0257 lipoprotein YnfC (236 aa).

Positions 1 to 16 (MKYKLLPCLLAILLTG) are cleaved as a signal peptide. C17 carries the N-palmitoyl cysteine lipid modification. A lipid anchor (S-diacylglycerol cysteine) is attached at C17.

It belongs to the UPF0257 family.

It localises to the cell membrane. This chain is UPF0257 lipoprotein YnfC, found in Escherichia coli O81 (strain ED1a).